Here is a 1051-residue protein sequence, read N- to C-terminus: Transcription intermediary factor 1-alpha (1051 aa).

The tract at residues 1–42 (MEVAVEKAAAAAAPAGGPAAAAPSGENEAESRQGPDSESGGE) is disordered. Lys7 is covalently cross-linked (Glycyl lysine isopeptide (Lys-Gly) (interchain with G-Cter in SUMO2)). The span at 8 to 23 (AAAAAAPAGGPAAAAP) shows a compositional bias: low complexity. An RING-type zinc finger spans residues 52–77 (CAVCHQNIQSRVPKLLPCLHSFCQRC). The disordered stretch occupies residues 94 to 115 (SAETPPPAPAPAPAPGSPAGGP). The residue at position 97 (Thr97) is a Phosphothreonine. The segment covering 97–109 (TPPPAPAPAPAPG) has biased composition (pro residues). Residue Ser110 is modified to Phosphoserine. B box-type zinc fingers lie at residues 158-211 (KSNQ…VSPE) and 218-259 (QRPV…YQFI). Zn(2+)-binding residues include Cys163, Cys166, Cys187, and His200. Lys205 participates in a covalent cross-link: Glycyl lysine isopeptide (Lys-Gly) (interchain with G-Cter in SUMO2). Positions 223, 226, 246, and 251 each coordinate Zn(2+). Residue Lys276 forms a Glycyl lysine isopeptide (Lys-Gly) (interchain with G-Cter in SUMO2) linkage. Residues 289–359 (NQIQNRIIEI…AGLSKQLEHV (71 aa)) are a coiled coil. The tract at residues 429 to 457 (ESQPQMPKQNPVVEQSSQPPGGLPSNQLS) is disordered. Over residues 431–457 (QPQMPKQNPVVEQSSQPPGGLPSNQLS) the composition is skewed to polar residues. Residues Lys436 and Lys458 each participate in a glycyl lysine isopeptide (Lys-Gly) (interchain with G-Cter in SUMO2) cross-link. The residue at position 469 (Arg469) is an Omega-N-methylarginine. Low complexity-rich tracts occupy residues 479-490 (AQRQQVQRRPAP) and 501-510 (PIQQPSISHQ). The interval 479-551 (AQRQQVQRRP…PSQNVPRQTT (73 aa)) is disordered. A compositionally biased stretch (pro residues) spans 526 to 535 (PNGPVLPPYP). The span at 538-551 (LRYSPSQNVPRQTT) shows a compositional bias: polar residues. Glycyl lysine isopeptide (Lys-Gly) (interchain with G-Cter in SUMO2) cross-links involve residues Lys553 and Lys642. The interval 644–713 (TGVDHAQPRP…PAGADSTHKV (70 aa)) is disordered. Residues Ser655, Ser661, and Ser668 each carry the phosphoserine modification. Over residues 655–667 (SNRTVQSPNSSVP) the composition is skewed to polar residues. Over residues 686-708 (SPSASSVGSRGSSGSSSKPAGAD) the composition is skewed to low complexity. Glycyl lysine isopeptide (Lys-Gly) (interchain with G-Cter in SUMO2) cross-links involve residues Lys703 and Lys712. Residues Lys724 and Lys742 each participate in a glycyl lysine isopeptide (Lys-Gly) (interchain with G-Cter in SUMO); alternate cross-link. Residue Lys724 forms a Glycyl lysine isopeptide (Lys-Gly) (interchain with G-Cter in SUMO1); alternate linkage. Glycyl lysine isopeptide (Lys-Gly) (interchain with G-Cter in SUMO2); alternate cross-links involve residues Lys724 and Lys742. A phosphoserine mark is found at Ser745 and Ser769. The interval 755–780 (NYPRSILTSLLLNSSQSSASEETVLR) is nuclear receptor binding site (NRBS). The tract at residues 771-827 (SSASEETVLRSDAPDSTGDQPGLHQENSSNGKSEWSDASQKSPVHVGETRKEDDPNE) is disordered. Over residues 795–812 (QENSSNGKSEWSDASQKS) the composition is skewed to polar residues. Lys802 is covalently cross-linked (Glycyl lysine isopeptide (Lys-Gly) (interchain with G-Cter in SUMO2)). At Ser809 the chain carries Phosphoserine. Residue Lys811 forms a Glycyl lysine isopeptide (Lys-Gly) (interchain with G-Cter in SUMO2) linkage. A Phosphoserine modification is found at Ser812. Phosphothreonine is present on Thr819. The PHD-type zinc finger occupies 827 to 874 (EDWCAVCQNGGELLCCEKCPKVFHLTCHVPTLTNFPSGEWICTFCRDL). The segment at 835–841 (NGGELLC) is interaction with histone H3 that is not methylated at 'Lys-4' (H3K4me0). A Glycyl lysine isopeptide (Lys-Gly) (interchain with G-Cter in SUMO2) cross-link involves residue Lys876. A Nuclear localization signal motif is present at residues 892 to 908 (KRKSEGLTKLTPIDKRK). The 106-residue stretch at 900–1005 (KLTPIDKRKC…SYFEELLKNL (106 aa)) folds into the Bromo domain. Glycyl lysine isopeptide (Lys-Gly) (interchain with G-Cter in SUMO2) cross-links involve residues Lys950 and Lys993. Residues 1024–1051 (KFSDDSDDDFVQPRKKRLKSTEDRQLLK) form a disordered region. A phosphoserine mark is found at Ser1026 and Ser1029. Lys1042 is covalently cross-linked (Glycyl lysine isopeptide (Lys-Gly) (interchain with G-Cter in SUMO2)). A compositionally biased stretch (basic and acidic residues) spans 1042–1051 (KSTEDRQLLK). Residue Ser1043 is modified to Phosphoserine.

As to quaternary structure, interacts (via bromo domain) with histone H3 (via N-terminus), provided that it is not methylated at 'Lys-4' (H3K4me0). Does not interact with histone H3 that is methylated at 'Lys-4' (H3K4me1, H3K4me2 or H3K4me3). Interacts (via bromo domain) with histone H3 (via N-terminus) that is acetylated at 'Lys-23' (H3K23ac). Has the highest affinity for histone H3 that is both unmodified at 'Lys-4' (H3K4me0) and acetylated at 'Lys-23' (H3K23ac). Has very low affinity for histone H3 that is methylated at 'Lys-9' (H3K9me), or acetylated at both 'Lys-9' (H3K9ac) and 'Lys-14' (H3K14ac), or acetylated at 'Lys-27' (H3K27ac) (in vitro). Interacts with TRIM16. Interacts with NR3C2/MCR. Interacts with the ligand-binding domain of estrogen receptors (in vitro). Interaction with DNA-bound estrogen receptors requires the presence of estradiol. Interacts with AR, CARM1, KAT5/TIP60, NCOA2/GRIP1, BRD7, CBX1, CBX3 and CBX5. Part of a coactivator complex containing TRIM24, NCOA2/GRIP1 and CARM1. Interacts with p53/TP53 and PML. In terms of processing, sumoylated. Phosphorylated at Ser-768 by ATM kinase induces ubiquitination and degradation during DNA damage. Post-translationally, undergoes ubiquitination-mediated degradation in response to DNA damage. Detected in embryonic and adult liver. Detected in zygote and throughout embryogenesis (at protein level). Detected in all adult tissues, with the highest expression level in testis.

The protein localises to the nucleus. It localises to the cytoplasm. It catalyses the reaction S-ubiquitinyl-[E2 ubiquitin-conjugating enzyme]-L-cysteine + [acceptor protein]-L-lysine = [E2 ubiquitin-conjugating enzyme]-L-cysteine + N(6)-ubiquitinyl-[acceptor protein]-L-lysine.. It participates in protein modification; protein ubiquitination. Transcriptional coactivator that interacts with numerous nuclear receptors and coactivators and modulates the transcription of target genes. Interacts with chromatin depending on histone H3 modifications, having the highest affinity for histone H3 that is both unmodified at 'Lys-4' (H3K4me0) and acetylated at 'Lys-23' (H3K23ac). Has E3 protein-ubiquitin ligase activity. Promotes ubiquitination and proteasomal degradation of p53/TP53. Plays a role in the regulation of cell proliferation and apoptosis via its effects on p53/TP53 levels. Up-regulates ligand-dependent transcription activation by AR, GCR/NR3C1, thyroid hormone receptor (TR) and ESR1. Modulates transcription activation by retinoic acid (RA) receptors, such as RARA. Plays a role in regulating retinoic acid-dependent proliferation of hepatocytes. Required for normal transition from proliferating neonatal hepatocytes to quiescent adult hepatocytes. In terms of biological role, transcriptional coactivator that interacts with numerous nuclear receptors and coactivators and modulates the transcription of target genes. Interacts with chromatin depending on histone H3 modifications, having the highest affinity for histone H3 that is both unmodified at 'Lys-4' (H3K4me0) and acetylated at 'Lys-23' (H3K23ac). Has E3 protein-ubiquitin ligase activity. During the DNA damage response, participates in an autoregulatory feedback loop with TP53. Early in response to DNA damage, ATM kinase phosphorylates TRIM24 leading to its ubiquitination and degradation. After sufficient DNA repair has occurred, TP53 activates TRIM24 transcription, ultimately leading to TRIM24-mediated TP53 ubiquitination and degradation. Plays a role in the regulation of cell proliferation and apoptosis, at least in part via its effects on p53/TP53 levels. Up-regulates ligand-dependent transcription activation by AR, GCR/NR3C1, thyroid hormone receptor (TR) and ESR1. Modulates transcription activation by retinoic acid (RA) receptors, including RARA. Plays a role in regulating retinoic acid-dependent proliferation of hepatocytes. Also participates in innate immunity by mediating the specific 'Lys-63'-linked ubiquitination of TRAF3 leading to activation of downstream signal transduction of the type I IFN pathway. Additionally, negatively regulates NLRP3/CASP1/IL-1beta-mediated pyroptosis and cell migration probably by ubiquitinating NLRP3. In Mus musculus (Mouse), this protein is Transcription intermediary factor 1-alpha (Trim24).